Here is a 527-residue protein sequence, read N- to C-terminus: Probable bifunctional tRNA threonylcarbamoyladenosine biosynthesis protein (527 aa).

Positions 1 to 324 (MIVLGLEGTA…YRIDEVDAPW (324 aa)) are kae1. Residues histidine 107, histidine 111, and tyrosine 128 each coordinate Fe cation. L-threonylcarbamoyladenylate is bound by residues 128–132 (YVSGG), aspartate 160, glycine 173, glutamate 177, and asparagine 257. Aspartate 285 serves as a coordination point for Fe cation. The region spanning 330 to 527 (VKYRDAGAES…EDIRRRHRYV (198 aa)) is the Protein kinase domain. ATP is bound by residues 333–341 (RDAGAESRI) and lysine 354. Residue aspartate 445 is the Proton acceptor; for kinase activity of the active site.

This sequence in the N-terminal section; belongs to the KAE1 / TsaD family. The protein in the C-terminal section; belongs to the protein kinase superfamily. Tyr protein kinase family. BUD32 subfamily. In terms of assembly, component of the KEOPS complex that consists of Kae1, Bud32, Cgi121 and Pcc1; the whole complex dimerizes. It depends on Fe(2+) as a cofactor.

It localises to the cytoplasm. The catalysed reaction is L-seryl-[protein] + ATP = O-phospho-L-seryl-[protein] + ADP + H(+). It carries out the reaction L-threonyl-[protein] + ATP = O-phospho-L-threonyl-[protein] + ADP + H(+). The enzyme catalyses L-threonylcarbamoyladenylate + adenosine(37) in tRNA = N(6)-L-threonylcarbamoyladenosine(37) in tRNA + AMP + H(+). Functionally, required for the formation of a threonylcarbamoyl group on adenosine at position 37 (t(6)A37) in tRNAs that read codons beginning with adenine. Is a component of the KEOPS complex that is probably involved in the transfer of the threonylcarbamoyl moiety of threonylcarbamoyl-AMP (TC-AMP) to the N6 group of A37. The Kae1 domain likely plays a direct catalytic role in this reaction. The Bud32 domain probably displays kinase activity that regulates Kae1 function. The protein is Probable bifunctional tRNA threonylcarbamoyladenosine biosynthesis protein of Thermoplasma volcanium (strain ATCC 51530 / DSM 4299 / JCM 9571 / NBRC 15438 / GSS1).